The sequence spans 369 residues: DNA replication and repair protein RecF (369 aa).

30 to 37 serves as a coordination point for ATP; it reads GPNGSGKT.

It belongs to the RecF family.

It localises to the cytoplasm. Functionally, the RecF protein is involved in DNA metabolism; it is required for DNA replication and normal SOS inducibility. RecF binds preferentially to single-stranded, linear DNA. It also seems to bind ATP. The sequence is that of DNA replication and repair protein RecF from Chlorobium luteolum (strain DSM 273 / BCRC 81028 / 2530) (Pelodictyon luteolum).